We begin with the raw amino-acid sequence, 36 residues long: Photosystem I reaction center subunit VIII (36 aa).

The chain crosses the membrane as a helical span at residues phenylalanine 10 to tyrosine 29.

This sequence belongs to the PsaI family.

Its subcellular location is the plastid. It localises to the chloroplast thylakoid membrane. Its function is as follows. May help in the organization of the PsaL subunit. This Oryza nivara (Indian wild rice) protein is Photosystem I reaction center subunit VIII.